The sequence spans 184 residues: MKSLLLLTTLLIPLHLGMAWSAKYAVDCPEHCDNTECRSSLRCKRTVLDDCGCCQVCAAGPGETCYRTVSGMDGVKCGPGLKCHFYSEEDDFGDEFGVCKDCPYGTFGMDCKETCNCQSGICDRVTGRCLDFPFFQYAAAKSPSRTSASQTERDAASGDGNAVREEIGDRNAARPSVMKWLNPR.

The signal sequence occupies residues 1–21; the sequence is MKSLLLLTTLLIPLHLGMAWS. The IGFBP N-terminal domain occupies 24-102; it reads YAVDCPEHCD…GDEFGVCKDC (79 aa). 6 disulfide bridges follow: cysteine 28–cysteine 51, cysteine 32–cysteine 53, cysteine 37–cysteine 54, cysteine 43–cysteine 57, cysteine 65–cysteine 83, and cysteine 77–cysteine 99. Positions 145-184 are disordered; that stretch reads RTSASQTERDAASGDGNAVREEIGDRNAARPSVMKWLNPR. The span at 151–172 shows a compositional bias: basic and acidic residues; sequence TERDAASGDGNAVREEIGDRNA. The O-linked (Xyl...) (chondroitin sulfate) serine glycan is linked to serine 157.

In terms of processing, O-glycosylated; contains chondroitin sulfate and dermatan sulfate. In terms of tissue distribution, pineal gland specific.

Its subcellular location is the secreted. In terms of biological role, involved in angiogenesis; promotes angiogenic sprouting. May have potent implications in lung endothelial cell-leukocyte interactions. In Rattus norvegicus (Rat), this protein is Endothelial cell-specific molecule 1 (Esm1).